A 591-amino-acid chain; its full sequence is Lipoprotein LpqB (591 aa).

A signal peptide spans 1 to 20; sequence MTLRPSRRAVLSAAAVLLTG. The N-palmitoyl cysteine moiety is linked to residue cysteine 21. Cysteine 21 carries S-diacylglycerol cysteine lipidation.

This sequence belongs to the LpqB lipoprotein family.

Its subcellular location is the cell membrane. In Cutibacterium acnes (strain DSM 16379 / KPA171202) (Propionibacterium acnes), this protein is Lipoprotein LpqB.